The following is a 65-amino-acid chain: Large ribosomal subunit protein bL35 (65 aa).

The protein belongs to the bacterial ribosomal protein bL35 family.

In Synechococcus sp. (strain WH7803), this protein is Large ribosomal subunit protein bL35.